The sequence spans 222 residues: Noggin (222 aa).

A signal peptide spans 1-19 (MDHSQCLVTIYALMVFLGL). N61 carries an N-linked (GlcNAc...) asparagine glycan. 4 cysteine pairs are disulfide-bonded: C145-C182, C168-C218, C174-C220, and C197-C205.

This sequence belongs to the noggin family. As to quaternary structure, homodimer.

It is found in the secreted. Patterns the embryo by interrupting bone morphogenetic proteins (BMP) signaling. Binds BMP-4 and BMP-2 with high affinity. Can abolish BMP-4 activity by blocking binding to cognate cell-surface receptors. Capable of inducing dorsal development in embryos. Causes dorsal mesodermal differentiation of animal cap ectoderm when coexpressed with xWNT-8 and nuclear, sequence-specific DNA-binding protein xBRA. None of these molecules causes dorsal mesoderm formation when expressed alone. The polypeptide is Noggin (nog) (Xenopus laevis (African clawed frog)).